The chain runs to 299 residues: Pyridoxal 5'-phosphate synthase subunit PdxS (299 aa).

Aspartate 24 lines the D-ribose 5-phosphate pocket. Residue lysine 81 is the Schiff-base intermediate with D-ribose 5-phosphate of the active site. Glycine 153 serves as a coordination point for D-ribose 5-phosphate. Residue arginine 165 participates in D-glyceraldehyde 3-phosphate binding. D-ribose 5-phosphate contacts are provided by residues glycine 219 and 240 to 241; that span reads GS.

The protein belongs to the PdxS/SNZ family. In terms of assembly, in the presence of PdxT, forms a dodecamer of heterodimers.

The enzyme catalyses aldehydo-D-ribose 5-phosphate + D-glyceraldehyde 3-phosphate + L-glutamine = pyridoxal 5'-phosphate + L-glutamate + phosphate + 3 H2O + H(+). The protein operates within cofactor biosynthesis; pyridoxal 5'-phosphate biosynthesis. Functionally, catalyzes the formation of pyridoxal 5'-phosphate from ribose 5-phosphate (RBP), glyceraldehyde 3-phosphate (G3P) and ammonia. The ammonia is provided by the PdxT subunit. Can also use ribulose 5-phosphate and dihydroxyacetone phosphate as substrates, resulting from enzyme-catalyzed isomerization of RBP and G3P, respectively. This Methanococcus maripaludis (strain C7 / ATCC BAA-1331) protein is Pyridoxal 5'-phosphate synthase subunit PdxS.